The following is a 586-amino-acid chain: Glutathione hydrolase 5 proenzyme (586 aa).

The Cytoplasmic portion of the chain corresponds to 1–8; it reads MARGYGAT. Residues 9 to 29 form a helical; Signal-anchor for type II membrane protein membrane-spanning segment; the sequence is VSLVLLGLGLALAVIVLAVVL. The Extracellular segment spans residues 30 to 586; sequence SRHQAPCGPQ…LRKSGEAAGY (557 aa). A glycan (N-linked (GlcNAc...) asparagine) is linked at N98. Position 110 (R110) interacts with L-glutamate. 3 N-linked (GlcNAc...) asparagine glycosylation sites follow: N204, N303, and N347. Catalysis depends on T388, which acts as the Nucleophile. L-glutamate-binding positions include T406, E427, and 469-470; that span reads SS. Residues N535 and N550 are each glycosylated (N-linked (GlcNAc...) asparagine).

Belongs to the gamma-glutamyltransferase family. In terms of assembly, heterodimer composed of the light and heavy chains. The active site is located in the light chain. Post-translationally, cleaved by autocatalysis into a large and a small subunit. In terms of processing, glycosylated. As to expression, expressed in follicular dendritic cells in lymphoid follicles (at protein level).

It is found in the membrane. It catalyses the reaction glutathione + H2O = L-cysteinylglycine + L-glutamate. The catalysed reaction is an S-substituted glutathione + H2O = an S-substituted L-cysteinylglycine + L-glutamate. It carries out the reaction leukotriene C4 + H2O = leukotriene D4 + L-glutamate. The enzyme catalyses S-[(2E,6E,10E)-geranylgeranyl]-L-glutathione + H2O = S-[(2E,6E,10E)-geranylgeranyl]-L-cysteinylglycine + L-glutamate. It catalyses the reaction an N-terminal (5-L-glutamyl)-[peptide] + an alpha-amino acid = 5-L-glutamyl amino acid + an N-terminal L-alpha-aminoacyl-[peptide]. It functions in the pathway sulfur metabolism; glutathione metabolism. It participates in lipid metabolism; leukotriene D4 biosynthesis. With respect to regulation, inhibited by serine-borate. Functionally, cleaves the gamma-glutamyl bond of extracellular glutathione tripeptide (gamma-Glu-Cys-Gly) and certain glutathione conjugates. Hydrolyzes glutathione releasing L-Glu and Cys-Gly dipeptide which is further metabolized to maintain extracellular cysteine levels but also to provide cysteine necessary for intracellular glutathione synthesis. Among glutathione-S-conjugates metabolizes leukotriene C4 (LTC4) and S-geranylgeranyl-glutathione (GGG), but is inactive toward gamma-glutamyl leucine. Converts extracellular LTC4 to LTD4 during acute inflammatory response. Acts as a negative regulator of GGG bioactivity. GGT5 (via GGG catabolism) and ABCC1 (via extracellular transport) establish GGG gradients within lymphoid tissues to position P2RY8-positive lymphocytes at germinal centers in lymphoid follicles and restrict their chemotactic transmigration from blood vessels to bone marrow parenchyma. The transpeptidation reaction, i.e. the transfer of gamma-glutamyl moiety to an acceptor molecule to yield a new gamma-glutamyl compound requires high concentration of dipeptide acceptor and is considered nonphysiological. The polypeptide is Glutathione hydrolase 5 proenzyme (GGT5) (Homo sapiens (Human)).